Consider the following 292-residue polypeptide: ATP synthase gamma chain (292 aa).

The protein belongs to the ATPase gamma chain family. F-type ATPases have 2 components, CF(1) - the catalytic core - and CF(0) - the membrane proton channel. CF(1) has five subunits: alpha(3), beta(3), gamma(1), delta(1), epsilon(1). CF(0) has three main subunits: a, b and c.

The protein resides in the cell inner membrane. Produces ATP from ADP in the presence of a proton gradient across the membrane. The gamma chain is believed to be important in regulating ATPase activity and the flow of protons through the CF(0) complex. This Brucella ovis (strain ATCC 25840 / 63/290 / NCTC 10512) protein is ATP synthase gamma chain.